The chain runs to 244 residues: Phosphoadenosine 5'-phosphosulfate reductase (244 aa).

C239 serves as the catalytic Nucleophile; cysteine thiosulfonate intermediate.

This sequence belongs to the PAPS reductase family. CysH subfamily.

The protein localises to the cytoplasm. It catalyses the reaction [thioredoxin]-disulfide + sulfite + adenosine 3',5'-bisphosphate + 2 H(+) = [thioredoxin]-dithiol + 3'-phosphoadenylyl sulfate. It participates in sulfur metabolism; hydrogen sulfide biosynthesis; sulfite from sulfate: step 3/3. Its function is as follows. Catalyzes the formation of sulfite from phosphoadenosine 5'-phosphosulfate (PAPS) using thioredoxin as an electron donor. This Escherichia coli (strain K12 / MC4100 / BW2952) protein is Phosphoadenosine 5'-phosphosulfate reductase.